The primary structure comprises 236 residues: Phosphoglycolate phosphatase (236 aa).

Catalysis depends on aspartate 14, which acts as the Nucleophile. Residues aspartate 14, aspartate 16, and aspartate 177 each coordinate Mg(2+).

Belongs to the HAD-like hydrolase superfamily. CbbY/CbbZ/Gph/YieH family. It depends on Mg(2+) as a cofactor.

It carries out the reaction 2-phosphoglycolate + H2O = glycolate + phosphate. It participates in organic acid metabolism; glycolate biosynthesis; glycolate from 2-phosphoglycolate: step 1/1. Specifically catalyzes the dephosphorylation of 2-phosphoglycolate. Is involved in the dissimilation of the intracellular 2-phosphoglycolate formed during the DNA repair of 3'-phosphoglycolate ends, a major class of DNA lesions induced by oxidative stress. The protein is Phosphoglycolate phosphatase of Neisseria gonorrhoeae (strain ATCC 700825 / FA 1090).